The chain runs to 362 residues: Zinc phosphodiesterase ELAC protein 1 (362 aa).

Histidine 62, histidine 64, aspartate 66, histidine 67, histidine 181, aspartate 252, and histidine 312 together coordinate Zn(2+). The active-site Proton acceptor is aspartate 66.

Belongs to the RNase Z family. As to quaternary structure, homodimer. It depends on Zn(2+) as a cofactor.

It is found in the cytoplasm. The protein localises to the cytosol. The protein resides in the nucleus. It catalyses the reaction Endonucleolytic cleavage of RNA, removing extra 3' nucleotides from tRNA precursor, generating 3' termini of tRNAs. A 3'-hydroxy group is left at the tRNA terminus and a 5'-phosphoryl group is left at the trailer molecule.. Its function is as follows. Zinc phosphodiesterase, which displays some tRNA 3'-processing endonuclease activity. Specifically involved in tRNA repair: acts downstream of the ribosome-associated quality control (RQC) pathway by removing a 2',3'-cyclic phosphate from tRNAs following cleavage by ANKZF1. tRNAs are then processed by TRNT1. The chain is Zinc phosphodiesterase ELAC protein 1 (Elac1) from Mus musculus (Mouse).